The following is a 415-amino-acid chain: MENLVEKLKKAKESTYILSLLNTNEKNEALRAIANNIEKNIDKIIKENEKDIKRGEEKGLSKAILDRILLNEKRLKDIVKSIEDVIKLPDPVGEIVSMQKRPNGILVGQMRVPIGVIAIIYEARPNVTVDATILALKSGNAIVLRGSSDALNSNIILTNIMKEALSNTKIPQDAVQIIESPEHSVVEELLQMTDYIDVAIPRGSAKFIKHVMNISKVPVIETGAGNNHIYVEEDADFEMARKIIINAKVQRPSVCNAIEKLLVHKNIAEEFLPVIVKDLREYNVEIRGCEKTLKIVKDAIPATEEDWYTEYLDYIIAIKVVDSIDEAIAHINKYNTKHSEAIITKDYHKALKFLRMVDAAAVYVNASTRFTDGGEFGLGAEIGISTQKLHARGPMGLKELTTTKYVIFGEGQIRE.

Belongs to the gamma-glutamyl phosphate reductase family.

It localises to the cytoplasm. It catalyses the reaction L-glutamate 5-semialdehyde + phosphate + NADP(+) = L-glutamyl 5-phosphate + NADPH + H(+). It functions in the pathway amino-acid biosynthesis; L-proline biosynthesis; L-glutamate 5-semialdehyde from L-glutamate: step 2/2. Catalyzes the NADPH-dependent reduction of L-glutamate 5-phosphate into L-glutamate 5-semialdehyde and phosphate. The product spontaneously undergoes cyclization to form 1-pyrroline-5-carboxylate. The sequence is that of Gamma-glutamyl phosphate reductase from Dictyoglomus thermophilum (strain ATCC 35947 / DSM 3960 / H-6-12).